A 364-amino-acid polypeptide reads, in one-letter code: MTHQFPALSPEQKKALSDIAQRIVASGKGILAADESVGTMGNRLQRINVENTEENRRAFREILFSSDASISKSIGGVILFHETLYQKDSSGKPFPAIIKEKGMVVGIKLDAGTAPLAGTNGETTIQGLDKLAERCAQYKKDGADFGKWRAVLKISSTTPSQLAIQENANTLARYASICQQNGLVPIVEPEVLPDGDHDLQRCQYVTEKVLAAVYKALNDHHVYLEGTLLKPNMVTAGHSCPKKYTPQDVAVATVTTLLRTVPAAVPGICFLSGGQSEEEASLNLNAMNQSPLPKPWKLTFSYGRALQASALAAWLGKSENKKAAQEAFCKRAQINSLACRGQYVTSGKTDTAATQSLFTASYTY.

Residues R56 and K147 each coordinate substrate. The active-site Proton acceptor is the E188. K230 (schiff-base intermediate with dihydroxyacetone-P) is an active-site residue.

It belongs to the class I fructose-bisphosphate aldolase family. In terms of assembly, homotetramer.

It localises to the cytoplasm. It is found in the cytoskeleton. Its subcellular location is the microtubule organizing center. The protein resides in the centrosome. The protein localises to the centriolar satellite. The catalysed reaction is beta-D-fructose 1,6-bisphosphate = D-glyceraldehyde 3-phosphate + dihydroxyacetone phosphate. It functions in the pathway carbohydrate degradation; glycolysis; D-glyceraldehyde 3-phosphate and glycerone phosphate from D-glucose: step 4/4. The chain is Fructose-bisphosphate aldolase B (ALDOB) from Gallus gallus (Chicken).